The primary structure comprises 125 residues: MNKEEILEAIKNMTVLELAELVKALEEEFGVSAAAPVAVAAAPAAGAPAAAPAEEKTEFDVILQEVGSDKIKVIKVVREVTGLGLKEAKDLVESAPKPVKEGVSKDEANQIKAKFEEVGAKVEIK.

The protein belongs to the bacterial ribosomal protein bL12 family. As to quaternary structure, homodimer. Part of the ribosomal stalk of the 50S ribosomal subunit. Forms a multimeric L10(L12)X complex, where L10 forms an elongated spine to which 2 to 4 L12 dimers bind in a sequential fashion. Binds GTP-bound translation factors.

Functionally, forms part of the ribosomal stalk which helps the ribosome interact with GTP-bound translation factors. Is thus essential for accurate translation. The protein is Large ribosomal subunit protein bL12 of Thermoanaerobacter pseudethanolicus (strain ATCC 33223 / 39E) (Clostridium thermohydrosulfuricum).